A 173-amino-acid chain; its full sequence is Superoxide dismutase [Cu-Zn] (173 aa).

A signal peptide spans 1 to 19 (MKRFSLAILALVVATGAQA). Residues histidine 67, histidine 69, and histidine 92 each coordinate Cu cation. A disordered region spans residues 72-113 (GSCQPATKDGKASAAESAGGHLDPQNTGKHEGPEGAGHLGDL). The cysteines at positions 74 and 169 are disulfide-linked. Positions 92, 101, 109, and 112 each coordinate Zn(2+). Residue histidine 147 participates in Cu cation binding.

The protein belongs to the Cu-Zn superoxide dismutase family. In terms of assembly, monomer. Requires Cu cation as cofactor. The cofactor is Zn(2+).

The protein resides in the periplasm. It catalyses the reaction 2 superoxide + 2 H(+) = H2O2 + O2. In terms of biological role, destroys radicals which are normally produced within the cells and which are toxic to biological systems. The sequence is that of Superoxide dismutase [Cu-Zn] (sodC) from Escherichia coli O157:H7.